The following is a 325-amino-acid chain: DNA repair and recombination protein RadA (325 aa).

ATP is bound at residue 107–114; it reads GEFGSGKT.

Belongs to the eukaryotic RecA-like protein family.

Functionally, involved in DNA repair and in homologous recombination. Binds and assemble on single-stranded DNA to form a nucleoprotein filament. Hydrolyzes ATP in a ssDNA-dependent manner and promotes DNA strand exchange between homologous DNA molecules. The sequence is that of DNA repair and recombination protein RadA from Methanococcoides burtonii (strain DSM 6242 / NBRC 107633 / OCM 468 / ACE-M).